The primary structure comprises 166 residues: Ferric nitrobindin-like protein (166 aa).

The GXWXGXG motif lies at G21 to G27.

The protein belongs to the nitrobindin family.

This Cutibacterium acnes (strain DSM 16379 / KPA171202) (Propionibacterium acnes) protein is Ferric nitrobindin-like protein.